The chain runs to 138 residues: Large ribosomal subunit protein uL16 (138 aa).

Positions Met1–Gln13 are enriched in basic residues. Positions Met1–Thr22 are disordered.

It belongs to the universal ribosomal protein uL16 family. As to quaternary structure, part of the 50S ribosomal subunit.

In terms of biological role, binds 23S rRNA and is also seen to make contacts with the A and possibly P site tRNAs. The polypeptide is Large ribosomal subunit protein uL16 (Thiobacillus denitrificans (strain ATCC 25259 / T1)).